Here is a 126-residue protein sequence, read N- to C-terminus: Aspartate 1-decarboxylase (126 aa).

The active-site Schiff-base intermediate with substrate; via pyruvic acid is S25. A Pyruvic acid (Ser) modification is found at S25. T57 contributes to the substrate binding site. Y58 functions as the Proton donor in the catalytic mechanism. Residue 73 to 75 (GAA) participates in substrate binding.

It belongs to the PanD family. Heterooctamer of four alpha and four beta subunits. Pyruvate serves as cofactor. In terms of processing, is synthesized initially as an inactive proenzyme, which is activated by self-cleavage at a specific serine bond to produce a beta-subunit with a hydroxyl group at its C-terminus and an alpha-subunit with a pyruvoyl group at its N-terminus.

The protein resides in the cytoplasm. It catalyses the reaction L-aspartate + H(+) = beta-alanine + CO2. It participates in cofactor biosynthesis; (R)-pantothenate biosynthesis; beta-alanine from L-aspartate: step 1/1. Functionally, catalyzes the pyruvoyl-dependent decarboxylation of aspartate to produce beta-alanine. This chain is Aspartate 1-decarboxylase, found in Thioalkalivibrio sulfidiphilus (strain HL-EbGR7).